The sequence spans 351 residues: Ribonucleoside-diphosphate reductase subunit M2 B (351 aa).

Residues 1–31 (MGDPERPEAAGLDQDERSSSDTNENEIKSNE) form a disordered region. Residues D100, E131, and H134 each contribute to the Fe cation site. The active site involves Y138. 3 residues coordinate Fe cation: E194, E228, and H231.

It belongs to the ribonucleoside diphosphate reductase small chain family. Heterotetramer with large (RRM1) subunit. Interacts with p53/TP53. Interacts with RRM1 in response to DNA damage. The cofactor is Fe cation.

The protein localises to the cytoplasm. Its subcellular location is the nucleus. The enzyme catalyses a 2'-deoxyribonucleoside 5'-diphosphate + [thioredoxin]-disulfide + H2O = a ribonucleoside 5'-diphosphate + [thioredoxin]-dithiol. Plays a pivotal role in cell survival by repairing damaged DNA in a p53/TP53-dependent manner. Supplies deoxyribonucleotides for DNA repair in cells arrested at G1 or G2. Contains an iron-tyrosyl free radical center required for catalysis. Forms an active ribonucleotide reductase (RNR) complex with RRM1 which is expressed both in resting and proliferating cells in response to DNA damage. This Pongo abelii (Sumatran orangutan) protein is Ribonucleoside-diphosphate reductase subunit M2 B (RRM2B).